Reading from the N-terminus, the 262-residue chain is F-actin-capping protein subunit alpha (262 aa).

This sequence belongs to the F-actin-capping protein alpha subunit family. In terms of assembly, heterodimer of an alpha and a beta subunit.

Functionally, F-actin-capping proteins bind in a Ca(2+)-independent manner to the fast growing ends of actin filaments (barbed end) thereby blocking the exchange of subunits at these ends. Unlike other capping proteins (such as gelsolin and severin), these proteins do not sever actin filaments. The sequence is that of F-actin-capping protein subunit alpha (CAP1) from Candida glabrata (strain ATCC 2001 / BCRC 20586 / JCM 3761 / NBRC 0622 / NRRL Y-65 / CBS 138) (Yeast).